Here is an 878-residue protein sequence, read N- to C-terminus: Protein translocase subunit SecA (878 aa).

Residues glutamine 81, 99–103 (GEGKT), and aspartate 489 contribute to the ATP site.

Belongs to the SecA family.

Its subcellular location is the plastid. The protein localises to the chloroplast stroma. The protein resides in the chloroplast thylakoid membrane. The catalysed reaction is ATP + H2O + cellular proteinSide 1 = ADP + phosphate + cellular proteinSide 2.. In terms of biological role, has a central role in coupling the hydrolysis of ATP to the transfer of proteins across the thylakoid membrane. The polypeptide is Protein translocase subunit SecA (Thalassiosira pseudonana (Marine diatom)).